Consider the following 382-residue polypeptide: Elongation factor Tu (382 aa).

Residues 1–7, 62–66, and 117–120 each bind GTP; these read HVDHGKT, DCPGH, and NKVD. A tr-type G domain is found at 1–190; that stretch reads HVDHGKTTLT…AVDEYIPTPQ (190 aa). Thr7 is a Mg(2+) binding site.

This sequence belongs to the TRAFAC class translation factor GTPase superfamily. Classic translation factor GTPase family. EF-Tu/EF-1A subfamily. As to quaternary structure, monomer.

Its subcellular location is the cytoplasm. The enzyme catalyses GTP + H2O = GDP + phosphate + H(+). Its function is as follows. GTP hydrolase that promotes the GTP-dependent binding of aminoacyl-tRNA to the A-site of ribosomes during protein biosynthesis. The protein is Elongation factor Tu of Chloroflexus aurantiacus.